We begin with the raw amino-acid sequence, 187 residues long: Adenylate kinase (187 aa).

Residue 10–15 (GSGKGT) coordinates ATP. The segment at 30–59 (STGDLLRSEVVAGTPLGLQAKQVMAQGDLV) is NMP. AMP-binding positions include threonine 31, arginine 36, 57–59 (DLV), 85–88 (GYPR), and glutamine 92. The tract at residues 126 to 136 (GRAQAEGREDD) is LID. Arginine 127 is an ATP binding site. Positions 133 and 144 each coordinate AMP. Residue glycine 172 participates in ATP binding.

It belongs to the adenylate kinase family. Monomer.

It is found in the cytoplasm. The enzyme catalyses AMP + ATP = 2 ADP. The protein operates within purine metabolism; AMP biosynthesis via salvage pathway; AMP from ADP: step 1/1. Functionally, catalyzes the reversible transfer of the terminal phosphate group between ATP and AMP. Plays an important role in cellular energy homeostasis and in adenine nucleotide metabolism. This Xylella fastidiosa (strain M12) protein is Adenylate kinase.